Here is a 183-residue protein sequence, read N- to C-terminus: MKYMIPDEEFIRREGVPITKEEIRAVSIGKLNLNKDDVVVDVGCGSGGMTVEIAKRCKFVYAIDYLDGAIEVTKQNLAKFNIKNCQIIKGRAEDVLDKLEFNKAFIGGTKNIEKIIEILDKKKINHIVANTIVLENAAKIINEFESRGYNVDAVNVFISYAKKIPSGHMFLAKNPITIIKAVR.

S-adenosyl-L-methionine-binding positions include Thr-19, 43–47, Asp-64, and Ala-92; that span reads GCGSG.

It belongs to the methyltransferase superfamily. Archaeal-type CbiT family.

It carries out the reaction Co-precorrin-6B + S-adenosyl-L-methionine = Co-precorrin-7 + S-adenosyl-L-homocysteine + CO2. It functions in the pathway cofactor biosynthesis; adenosylcobalamin biosynthesis; cob(II)yrinate a,c-diamide from sirohydrochlorin (anaerobic route): step 8/10. Its function is as follows. Catalyzes the methylation of C-15 in cobalt-precorrin-6B followed by the decarboxylation of C-12 to form cobalt-precorrin-7. In Methanocaldococcus jannaschii (strain ATCC 43067 / DSM 2661 / JAL-1 / JCM 10045 / NBRC 100440) (Methanococcus jannaschii), this protein is Probable cobalt-precorrin-6B C(15)-methyltransferase (decarboxylating).